Consider the following 88-residue polypeptide: uncharacterized protein (88 aa).

It belongs to the phD/YefM antitoxin family.

This is an uncharacterized protein from Sinorhizobium fredii (strain NBRC 101917 / NGR234).